A 283-amino-acid chain; its full sequence is 4-hydroxy-3-methylbut-2-enyl diphosphate reductase (283 aa).

Cysteine 12 contacts [4Fe-4S] cluster. (2E)-4-hydroxy-3-methylbut-2-enyl diphosphate-binding residues include histidine 40 and histidine 73. 2 residues coordinate dimethylallyl diphosphate: histidine 40 and histidine 73. Isopentenyl diphosphate contacts are provided by histidine 40 and histidine 73. [4Fe-4S] cluster is bound at residue cysteine 95. Histidine 123 is a binding site for (2E)-4-hydroxy-3-methylbut-2-enyl diphosphate. A dimethylallyl diphosphate-binding site is contributed by histidine 123. Histidine 123 contributes to the isopentenyl diphosphate binding site. Glutamate 125 acts as the Proton donor in catalysis. Threonine 161 is a (2E)-4-hydroxy-3-methylbut-2-enyl diphosphate binding site. Position 189 (cysteine 189) interacts with [4Fe-4S] cluster. Residues serine 217, asparagine 219, and serine 261 each coordinate (2E)-4-hydroxy-3-methylbut-2-enyl diphosphate. Dimethylallyl diphosphate-binding residues include serine 217, asparagine 219, and serine 261. Residues serine 217, asparagine 219, and serine 261 each coordinate isopentenyl diphosphate.

This sequence belongs to the IspH family. [4Fe-4S] cluster is required as a cofactor.

It catalyses the reaction isopentenyl diphosphate + 2 oxidized [2Fe-2S]-[ferredoxin] + H2O = (2E)-4-hydroxy-3-methylbut-2-enyl diphosphate + 2 reduced [2Fe-2S]-[ferredoxin] + 2 H(+). The enzyme catalyses dimethylallyl diphosphate + 2 oxidized [2Fe-2S]-[ferredoxin] + H2O = (2E)-4-hydroxy-3-methylbut-2-enyl diphosphate + 2 reduced [2Fe-2S]-[ferredoxin] + 2 H(+). Its pathway is isoprenoid biosynthesis; dimethylallyl diphosphate biosynthesis; dimethylallyl diphosphate from (2E)-4-hydroxy-3-methylbutenyl diphosphate: step 1/1. It functions in the pathway isoprenoid biosynthesis; isopentenyl diphosphate biosynthesis via DXP pathway; isopentenyl diphosphate from 1-deoxy-D-xylulose 5-phosphate: step 6/6. In terms of biological role, catalyzes the conversion of 1-hydroxy-2-methyl-2-(E)-butenyl 4-diphosphate (HMBPP) into a mixture of isopentenyl diphosphate (IPP) and dimethylallyl diphosphate (DMAPP). Acts in the terminal step of the DOXP/MEP pathway for isoprenoid precursor biosynthesis. This Citrifermentans bemidjiense (strain ATCC BAA-1014 / DSM 16622 / JCM 12645 / Bem) (Geobacter bemidjiensis) protein is 4-hydroxy-3-methylbut-2-enyl diphosphate reductase.